The primary structure comprises 710 residues: MAGVVLPASIQPQLLRPLAYRILTKKFGLNIKSDGLVALAAYIGTVFGLYWRQNSETTKFLEQFAIIWREQGRGLFVDELNVSQVINEIKEREKIEQDQHVEKRNNLHKANNLDAFLKRPNSPTDTEITTLSQGSATSVVNPDSHSPMMLEEGSPINSDSEPISEHERANGISNVDQQLDWLDYFKVIDAFNQQTFTYDHTKRQYIYVPRPKEVEKNMLSIAKLKLPNVESKVSLFTTRYHIIKDKVLRNEKFQNNDIFNPLSSIIEMGKHMNESDVSPLNSASYMKITQIKNLLGHDGKNFLLLGLLDQNSKGNWSLEDPSGSIELHLQQAIPTKGTYYVPGCIVLVEGIYYTASNTFVVSSITHPPGEKREDTIEAIGNLDLLGAYNPSNENYVARLDKDLKIRLHYLEQELSDNKFVILGGDIYLDEMTTMDGLKKTFDKLTTDPPVAIVFNGSFVSVPVHPSLNAKNVSATVSYKNNFDALATLLSNYENLINDTHMIFIPGPNDPWTSMVGLGTTTMWPQKIIPSSFTQKMSRICRKVHWGSNPLRIAYLSQEIVLTRDDLANRFKRYNIVFPTVEEEKYLENAELQEQYSRNPDVSVGQLIAFKNNLPVSVLESRKLVKTLLDQQHLSPFSSRIRPTVWDLDFTLQLSPLPSSIMLCDTSAPAFDVTYNGCKTINPGRFIHKRAAKYIEFFPASKVLVEEELPF.

Residues 116–167 (FLKRPNSPTDTEITTLSQGSATSVVNPDSHSPMMLEEGSPINSDSEPISEHE) are disordered. Residues 121–144 (NSPTDTEITTLSQGSATSVVNPDS) are compositionally biased toward polar residues.

The protein belongs to the DNA polymerase epsilon subunit B family. In terms of assembly, heterotetramer. Consists of four subunits: POL2, DPB2, DPB3 and DPB4.

The protein resides in the nucleus. As accessory component of the DNA polymerase epsilon (DNA polymerase II) participates in chromosomal DNA replication. The sequence is that of DNA polymerase epsilon subunit B (DPB2) from Kluyveromyces lactis (strain ATCC 8585 / CBS 2359 / DSM 70799 / NBRC 1267 / NRRL Y-1140 / WM37) (Yeast).